Reading from the N-terminus, the 227-residue chain is MSLETSSPYAFYAFYQLYSQFYRVPKITLETVNDFLYQGKGLKPEFARSPLFVTWKKLKKGEYQLRGCIGTFSEGKIEEGLKRYALISALQDSRFTPIEREELSQLRCGCNLLSQFKTIYSSEGTGNSGDIWNWEIGKHGIEIKFRHPKTNSRMSATFLPEVIPEQGWDQRETFENLIEKAGCWNYLEEVMKHWEKYFDEVIRYEGTKSEIAWDEFETGLSTVAEAE.

An AMMECR1 domain is found at 5–220 (TSSPYAFYAF…IAWDEFETGL (216 aa)).

This is an uncharacterized protein from Kluyveromyces lactis (strain ATCC 8585 / CBS 2359 / DSM 70799 / NBRC 1267 / NRRL Y-1140 / WM37) (Yeast).